The primary structure comprises 193 residues: Potassium-transporting ATPase KdpC subunit (193 aa).

Residues 7–27 (PLVVIFVVLTAVTGLAYPAVM) traverse the membrane as a helical segment.

It belongs to the KdpC family. In terms of assembly, the system is composed of three essential subunits: KdpA, KdpB and KdpC.

It localises to the cell inner membrane. Functionally, part of the high-affinity ATP-driven potassium transport (or Kdp) system, which catalyzes the hydrolysis of ATP coupled with the electrogenic transport of potassium into the cytoplasm. This subunit acts as a catalytic chaperone that increases the ATP-binding affinity of the ATP-hydrolyzing subunit KdpB by the formation of a transient KdpB/KdpC/ATP ternary complex. This is Potassium-transporting ATPase KdpC subunit from Burkholderia ambifaria (strain ATCC BAA-244 / DSM 16087 / CCUG 44356 / LMG 19182 / AMMD) (Burkholderia cepacia (strain AMMD)).